Here is a 606-residue protein sequence, read N- to C-terminus: Replication protein E1 (606 aa).

Positions 78–80 (KRK) match the Nuclear localization signal motif. A phosphoserine; by host mark is found at S83 and S91. Positions 90–99 (LSPRLESISL) match the Nuclear export signal motif. The DNA-binding region stretch occupies residues 146-309 (GSGDVDIHYT…TILGHKSAEA (164 aa)). In terms of domain architecture, SF3 helicase spans 408–558 (INFIVFLTAL…FPMKADNTPQ (151 aa)). 434–441 (GPPNSGKS) serves as a coordination point for ATP. K515 participates in a covalent cross-link: Glycyl lysine isopeptide (Lys-Gly) (interchain with G-Cter in SUMO). The disordered stretch occupies residues 581–606 (DQEEEGEDGESQRAFQCSARSANEHL). Polar residues predominate over residues 593–606 (RAFQCSARSANEHL).

The protein belongs to the papillomaviridae E1 protein family. Can form hexamers. Interacts with E2 protein; this interaction increases E1 DNA binding specificity. Interacts with host DNA polymerase subunit POLA2. Interacts with host single stranded DNA-binding protein RPA1. Interacts with host TOP1; this interaction stimulates the enzymatic activity of TOP1. Post-translationally, phosphorylated. In terms of processing, sumoylated.

The protein localises to the host nucleus. The enzyme catalyses Couples ATP hydrolysis with the unwinding of duplex DNA by translocating in the 3'-5' direction.. It catalyses the reaction ATP + H2O = ADP + phosphate + H(+). Functionally, ATP-dependent DNA 3'-5' helicase required for initiation of viral DNA replication. It forms a complex with the viral E2 protein. The E1-E2 complex binds to the replication origin which contains binding sites for both proteins. During the initial step, a dimer of E1 interacts with a dimer of protein E2 leading to a complex that binds the viral origin of replication with high specificity. Then, a second dimer of E1 displaces the E2 dimer in an ATP-dependent manner to form the E1 tetramer. Following this, two E1 monomers are added to each half of the site, which results in the formation of two E1 trimers on the viral ori. Subsequently, two hexamers will be created. The double hexamer acts as a bi-directional helicase machinery and unwinds the viral DNA and then recruits the host DNA polymerase to start replication. The protein is Replication protein E1 of Human papillomavirus type 5b.